Here is a 494-residue protein sequence, read N- to C-terminus: Glutamate--tRNA ligase (494 aa).

A 'HIGH' region motif is present at residues 10-20; the sequence is PSPTGDPHVGT. Residues Cys107, Cys109, Cys134, and His136 each coordinate Zn(2+). Residues 251 to 255 carry the 'KMSKS' region motif; that stretch reads KLSKR. Residue Lys254 coordinates ATP.

Belongs to the class-I aminoacyl-tRNA synthetase family. Glutamate--tRNA ligase type 1 subfamily. In terms of assembly, monomer. The cofactor is Zn(2+).

Its subcellular location is the cytoplasm. The catalysed reaction is tRNA(Glu) + L-glutamate + ATP = L-glutamyl-tRNA(Glu) + AMP + diphosphate. In terms of biological role, catalyzes the attachment of glutamate to tRNA(Glu) in a two-step reaction: glutamate is first activated by ATP to form Glu-AMP and then transferred to the acceptor end of tRNA(Glu). In Pseudomonas paraeruginosa (strain DSM 24068 / PA7) (Pseudomonas aeruginosa (strain PA7)), this protein is Glutamate--tRNA ligase.